Consider the following 414-residue polypeptide: Thyroid hormone receptor beta-B (414 aa).

Positions 1-59 are modulating; the sequence is MPSSMSVRLFTASAAQRKKIQEGDCCVVLAGKTQGRFILIGAVARVSGYIPSYLDKDEL. 2 consecutive NR C4-type zinc fingers follow at residues 60 to 80 and 98 to 122; these read CVVCGDKATGYHYRCITCEGC and CKYEGKCVIDKVTRNQCQECRFKKC. A DNA-binding region (nuclear receptor) is located at residues 60 to 134; the sequence is CVVCGDKATG…VGMATDLVLD (75 aa). Residues 170–414 form the NR LBD domain; the sequence is EEWELIQVVT…PPLFLEVFED (245 aa).

Belongs to the nuclear hormone receptor family. NR1 subfamily.

It is found in the nucleus. Its function is as follows. High affinity receptor for triiodothyronine (T3). The protein is Thyroid hormone receptor beta-B (thrb-b) of Xenopus laevis (African clawed frog).